A 644-amino-acid chain; its full sequence is MGRRRAPGGGSLGRVLIRQQTQRSRSHRHTDSWLHTSELNDGYDWGRLNLQSVTEQSSLEDFLATAELAGTEFVAEKLNIKFVPPEARTGLLSFEESQRIKKLHEENRQFLCIPRRPNWDRKTSPEELKQAEKDNFLKWRRQLVRLEEEQKLILTPFERNLDFWRQLWRVIERSDIVVQIVDARNPLLFRCEDLECYVKEIDAAKENVILINKADLLTAEQRFAWAVHFEKEGVKVIFWSALAETDHLNGDLKEEVDSVAGDTNKTESESSSLDANEIPHRDLISLSEESASDSGDSKYEDCQEDEEEDWQTCSEEDSVPEEEEGCNADSETQNRKNAENQQVNNDSYLVSKQELLELFKKLHTGKKVKDGQLTVGLVGYPNVGKSSTINTIMGNKKVSVSATPGHTKHFQTLYVEPGLCLCDCPGLVMPSFVSTKAEMICNGILPIDQMRDHVPPVSLVCQNIPRRVLEVTYGINIIKPREDEDPYRPPTSEELLTAYGCMRGFMTAHGQPDQPRSARYILKDYVGGKLLYCHPPPGKDPVAFQHQHQQLLESKVKGGELRLQPGKGRKAKQIENVVDKTFFHQENVRALTKGVQAVMGYKPGHGLVTAAAASAENVPGKPWKKHGNRNKKEKSRRLYKHLDV.

The disordered stretch occupies residues 1-31; the sequence is MGRRRAPGGGSLGRVLIRQQTQRSRSHRHTD. Ser-93 and Ser-97 each carry phosphoserine. The region spanning 164-430 is the CP-type G domain; the sequence is WRQLWRVIER…LCDCPGLVMP (267 aa). Position 212–215 (212–215) interacts with GTP; the sequence is NKAD. The tract at residues 253–345 is disordered; it reads KEEVDSVAGD…KNAENQQVNN (93 aa). A compositionally biased stretch (acidic residues) spans 302–326; it reads CQEDEEEDWQTCSEEDSVPEEEEGC. GTP contacts are provided by residues 379–386 and 423–426; these read GYPNVGKS and DCPG. The interval 618-644 is disordered; sequence VPGKPWKKHGNRNKKEKSRRLYKHLDV. The segment covering 622–644 has biased composition (basic residues); the sequence is PWKKHGNRNKKEKSRRLYKHLDV.

The protein belongs to the TRAFAC class YlqF/YawG GTPase family. LSG1 subfamily.

It is found in the cytoplasm. It localises to the endoplasmic reticulum. The protein resides in the nucleus. The protein localises to the cajal body. It catalyses the reaction GTP + H2O = GDP + phosphate + H(+). Its function is as follows. Functions as a GTPase. May act by mediating the release of NMD3 from the 60S ribosomal subunit after export into the cytoplasm during the 60S ribosomal subunit maturation. The chain is Large subunit GTPase 1 homolog from Mus musculus (Mouse).